We begin with the raw amino-acid sequence, 306 residues long: Ribonuclease Z (306 aa).

The Zn(2+) site is built by His63, His65, Asp67, His68, His140, Asp211, and His269. Asp67 (proton acceptor) is an active-site residue.

The protein belongs to the RNase Z family. Homodimer. Zn(2+) is required as a cofactor.

It catalyses the reaction Endonucleolytic cleavage of RNA, removing extra 3' nucleotides from tRNA precursor, generating 3' termini of tRNAs. A 3'-hydroxy group is left at the tRNA terminus and a 5'-phosphoryl group is left at the trailer molecule.. Its function is as follows. Zinc phosphodiesterase, which displays some tRNA 3'-processing endonuclease activity. Probably involved in tRNA maturation, by removing a 3'-trailer from precursor tRNA. The chain is Ribonuclease Z from Listeria monocytogenes serotype 4b (strain CLIP80459).